A 304-amino-acid polypeptide reads, in one-letter code: tRNA dimethylallyltransferase (304 aa).

13–20 lines the ATP pocket; it reads GPTAAGKT. A substrate-binding site is contributed by 15 to 20; sequence TAAGKT. Residues 38–41 are interaction with substrate tRNA; that stretch reads DSRQ.

This sequence belongs to the IPP transferase family. Monomer. Mg(2+) serves as cofactor.

The enzyme catalyses adenosine(37) in tRNA + dimethylallyl diphosphate = N(6)-dimethylallyladenosine(37) in tRNA + diphosphate. Catalyzes the transfer of a dimethylallyl group onto the adenine at position 37 in tRNAs that read codons beginning with uridine, leading to the formation of N6-(dimethylallyl)adenosine (i(6)A). The protein is tRNA dimethylallyltransferase of Cytophaga hutchinsonii (strain ATCC 33406 / DSM 1761 / CIP 103989 / NBRC 15051 / NCIMB 9469 / D465).